A 38-amino-acid chain; its full sequence is Alpha-conotoxin PeIA (38 aa).

The propeptide occupies 1–21 (FDGRNAAANDKASDLVALTVR). 2 disulfide bridges follow: Cys23–Cys29 and Cys24–Cys37. Residues 25–27 (SHP) are ser-Xaa-Pro motif, crucial for potent interaction with nAChR. Cys37 carries the cysteine amide modification.

It belongs to the conotoxin A superfamily. The hydroxylation at position Pro-27 is critical, since an hydroxylation at this position decreases potency of the toxin to inhibit both alpha-3-beta-2 (1300-fold) and alpha-6/alpha-3-beta-2-beta-3 (130-fold) nAChRs. Post-translationally, a non-modified residue at position Pro-34 is critical, since a hydroxylation at this position decreases potency of the toxin to inhibit alpha-3-beta-2 (1-45-fold) and increases potency to inhibit alpha-6/alpha-3-beta-2-beta-3 (1.77-fold) nAChRs. As to expression, expressed by the venom duct.

The protein localises to the secreted. Functionally, alpha-conotoxins act on postsynaptic membranes, they bind to the nicotinic acetylcholine receptors (nAChR) and thus inhibit them. This synthetic peptide potently and reversibly blocks alpha-9-alpha-10/CHRNA9-CHRNA10 nAChR (IC(50)=6.9-54.9 nM), alpha-3-beta-2/CHRNA3-CHRNB2 (IC(50)=9.7-97.5 nM) and alpha-6/alpha-3-beta-2-beta-3 (CHRNA6/CHRNA3-CHRNB2-CHRNB3) (IC(50)=11.1-17.2 nM). It also inhibits alpha-6/alpha-3-beta-4 (CHRNA6/CHRNA3-CHRNB4) nAChR with a higher potency on human (IC(50)=6.75 nM) than on rat receptors (IC(50)=130-147 nM). Also shows a weak ability to inhibit alpha-3-beta-4/CHRNA3-CHRNB4 (IC(50)=480-1500 nM). This synthetic toxin also inhibits N-type calcium channels (Ca2.2/CACNA1B) (IC(50)=1.1 nM) via the activation of the G protein-coupled GABA(B) receptor in DRG neurons. Also exhibits inhibition of D.melanogaster alpha-7/CHRNA7 nAChRs. The sequence is that of Alpha-conotoxin PeIA from Conus pergrandis (Grand cone).